A 544-amino-acid chain; its full sequence is GMP synthase [glutamine-hydrolyzing] (544 aa).

The Glutamine amidotransferase type-1 domain occupies Thr12–Gly210. Residue Cys88 is the Nucleophile of the active site. Active-site residues include His184 and Glu186. In terms of domain architecture, GMPS ATP-PPase spans Trp211–Arg419. An ATP-binding site is contributed by Ser239–Thr245. The XMP site is built by Arg312, Asp481, Lys536, and Glu542.

In terms of assembly, homodimer. Also forms a small population of homotetramers. It depends on Mg(2+) as a cofactor.

It is found in the cytoplasm. The protein localises to the cytosol. The enzyme catalyses XMP + L-glutamine + ATP + H2O = GMP + L-glutamate + AMP + diphosphate + 2 H(+). The protein operates within purine metabolism; GMP biosynthesis; GMP from XMP (L-Gln route): step 1/1. Catalyzes the conversion of xanthine monophosphate (XMP) to GMP in the presence of glutamine and ATP through an adenyl-XMP intermediate. This chain is GMP synthase [glutamine-hydrolyzing], found in Cryptococcus neoformans var. neoformans serotype D (strain JEC21 / ATCC MYA-565) (Filobasidiella neoformans).